Here is a 215-residue protein sequence, read N- to C-terminus: Small ribosomal subunit protein uS7 (215 aa).

Belongs to the universal ribosomal protein uS7 family. As to quaternary structure, part of the 30S ribosomal subunit.

Its function is as follows. One of the primary rRNA binding proteins, it binds directly to 16S rRNA where it nucleates assembly of the head domain of the 30S subunit. Is located at the subunit interface close to the decoding center. The polypeptide is Small ribosomal subunit protein uS7 (Pyrococcus abyssi (strain GE5 / Orsay)).